A 436-amino-acid polypeptide reads, in one-letter code: MKIIRGFAQAEKRLSRRDKAGFFLDETERTELARRLGVDPEKAVNGIIADVRKQGDEAVLGYTLKFDRANLSKLEVGQPEIQQAASEIPAELFEALQLAASQIRAYHRFQKEAVWKTAEIMQGKQLIRPLERVGLYVPGGKAFYPSTVLMTAIPAREAGVKEIILVTPPGANGKIPAPTLAAAQIAGVDRIFACGGAQAVAALAFGTKSIPKVDKICGPGNIFVTLAKKAVFGVVDIDGLQGPSEVLIVADQYANAEYCASDILAQAEHDALASSILITTSEDLANRVNDIVESKADTCSRRDIIKQSLRDNGLIAVVDNINEAIKLANMYAAEHLCLLVKDSEKYLTQINHAGCIFYGEKASVVMGDYVAGPSHALPTSGTARFSSPLNILDFVKYIDIVKVDKQDIAKLGQAAATIAKAEGLECHAEAVLKRLE.

NAD(+) contacts are provided by Tyr-136, Gln-198, and Asn-221. Substrate contacts are provided by Ser-244, Gln-266, and His-269. Zn(2+) is bound by residues Gln-266 and His-269. Residues Glu-334 and His-335 each act as proton acceptor in the active site. His-335, Asp-368, Glu-422, and His-427 together coordinate substrate. Asp-368 lines the Zn(2+) pocket. His-427 serves as a coordination point for Zn(2+).

It belongs to the histidinol dehydrogenase family. Requires Zn(2+) as cofactor.

The catalysed reaction is L-histidinol + 2 NAD(+) + H2O = L-histidine + 2 NADH + 3 H(+). The protein operates within amino-acid biosynthesis; L-histidine biosynthesis; L-histidine from 5-phospho-alpha-D-ribose 1-diphosphate: step 9/9. Its function is as follows. Catalyzes the sequential NAD-dependent oxidations of L-histidinol to L-histidinaldehyde and then to L-histidine. The chain is Histidinol dehydrogenase from Dehalococcoides mccartyi (strain CBDB1).